We begin with the raw amino-acid sequence, 162 residues long: Peptide methionine sulfoxide reductase MsrA (162 aa).

C16 is an active-site residue.

This sequence belongs to the MsrA Met sulfoxide reductase family.

It carries out the reaction L-methionyl-[protein] + [thioredoxin]-disulfide + H2O = L-methionyl-(S)-S-oxide-[protein] + [thioredoxin]-dithiol. The catalysed reaction is [thioredoxin]-disulfide + L-methionine + H2O = L-methionine (S)-S-oxide + [thioredoxin]-dithiol. In terms of biological role, has an important function as a repair enzyme for proteins that have been inactivated by oxidation. Catalyzes the reversible oxidation-reduction of methionine sulfoxide in proteins to methionine. The polypeptide is Peptide methionine sulfoxide reductase MsrA (Geobacter metallireducens (strain ATCC 53774 / DSM 7210 / GS-15)).